The sequence spans 424 residues: Mitogen-activated protein kinase mpkA (424 aa).

A Protein kinase domain is found at 23-314 (YNVTKELGQG…VEEALEHPYL (292 aa)). Residues 29–37 (LGQGAYGIV) and lysine 52 each bind ATP. The tract at residues 375-424 (QQIAQQTNVPIPDHQQGGWKQEEPKPQEVHAAGGHVNDLESSLQRGMDVQ) is disordered.

This sequence belongs to the protein kinase superfamily. Ser/Thr protein kinase family. Interacts with flbB, flbC, brlA, and rasB. Interacts with fmqA and fmqC. Interacts with hsp90. Mg(2+) serves as cofactor. In terms of processing, phosphorylated by the upstreamm MAPKK mkk2. Phosphorylation is induced during asexual development. Phosphorylation is regulated by rlmA.

The enzyme catalyses L-seryl-[protein] + ATP = O-phospho-L-seryl-[protein] + ADP + H(+). It carries out the reaction L-threonyl-[protein] + ATP = O-phospho-L-threonyl-[protein] + ADP + H(+). Activated by threonine and tyrosine phosphorylation by the upstreamm MAPKK mkk2. Functionally, mitogen-activated protein kinase; part of cell wall integrity (CWI) signaling pathway composed of pkcA, the bck1-mkk2-mpka MAPK cascade and the downstream rlmA transcription regulator. The CWI signaling pathway regulates cell wall integrity and pyomelanin formation. CWI also controls oxidative stress response, gliotoxin production, iron adaptation and asexual development. Finally, CWI is constitutively required for A.fumigatus to cope with the temperature increase found in the mammalian lung environment, during infection. MpkA positively modulates the expression of fumiquinazoline cluster during conidiogenesis and directly phosphorylates fmqC, and perhaps also fmqA. The chain is Mitogen-activated protein kinase mpkA from Aspergillus fumigatus (strain ATCC MYA-4609 / CBS 101355 / FGSC A1100 / Af293) (Neosartorya fumigata).